An 843-amino-acid chain; its full sequence is Protein translocase subunit SecA 1 (843 aa).

ATP contacts are provided by residues Gln-91, 109–113, and Asp-498; that span reads GEGKT. The segment covering 799-813 has biased composition (basic and acidic residues); it reads EAKHVSAEDGKEKVK. A disordered region spans residues 799–826; sequence EAKHVSAEDGKEKVKPKPIVKGDQVGRN. Zn(2+) is bound by residues Cys-829, Cys-831, Cys-840, and His-841.

Belongs to the SecA family. As to quaternary structure, monomer and homodimer. Part of the essential Sec protein translocation apparatus which comprises SecA, SecYEG and auxiliary proteins SecDF. Other proteins may also be involved. It depends on Zn(2+) as a cofactor.

The protein localises to the cell membrane. Its subcellular location is the cytoplasm. The enzyme catalyses ATP + H2O + cellular proteinSide 1 = ADP + phosphate + cellular proteinSide 2.. In terms of biological role, part of the Sec protein translocase complex. Interacts with the SecYEG preprotein conducting channel. Has a central role in coupling the hydrolysis of ATP to the transfer of proteins into and across the cell membrane, serving as an ATP-driven molecular motor driving the stepwise translocation of polypeptide chains across the membrane. The chain is Protein translocase subunit SecA 1 from Staphylococcus aureus (strain MRSA252).